Reading from the N-terminus, the 245-residue chain is Lactate utilization protein A (245 aa).

This sequence belongs to the LutA/YkgE family.

Functionally, is involved in L-lactate degradation and allows cells to grow with lactate as the sole carbon source. The sequence is that of Lactate utilization protein A from Macrococcus caseolyticus (strain JCSC5402) (Macrococcoides caseolyticum).